The sequence spans 80 residues: Cortexin-3 (80 aa).

A helical transmembrane segment spans residues 28–48 (TTFVFVILLFIFLGILIVRCF).

This sequence belongs to the cortexin family.

The protein localises to the membrane. The chain is Cortexin-3 (Ctxn3) from Mus musculus (Mouse).